Reading from the N-terminus, the 352-residue chain is Histidine biosynthesis bifunctional protein HisB (352 aa).

Residues 1–163 (MKKILFIDRD…MVASAIINDA (163 aa)) form a histidinol-phosphatase region. Asp-8 functions as the Nucleophile in the catalytic mechanism. 2 residues coordinate Mg(2+): Asp-8 and Asp-10. Residue Asp-10 is the Proton donor of the active site. Positions 91, 93, 99, and 101 each coordinate Zn(2+). Asp-128 lines the Mg(2+) pocket. Residues 164-352 (RKASVQRKTK…NYLPSTKGVL (189 aa)) form an imidazoleglycerol-phosphate dehydratase region.

It in the N-terminal section; belongs to the histidinol-phosphatase family. The protein in the C-terminal section; belongs to the imidazoleglycerol-phosphate dehydratase family. The cofactor is Mg(2+). It depends on Zn(2+) as a cofactor.

It localises to the cytoplasm. It catalyses the reaction D-erythro-1-(imidazol-4-yl)glycerol 3-phosphate = 3-(imidazol-4-yl)-2-oxopropyl phosphate + H2O. It carries out the reaction L-histidinol phosphate + H2O = L-histidinol + phosphate. It participates in amino-acid biosynthesis; L-histidine biosynthesis; L-histidine from 5-phospho-alpha-D-ribose 1-diphosphate: step 6/9. Its pathway is amino-acid biosynthesis; L-histidine biosynthesis; L-histidine from 5-phospho-alpha-D-ribose 1-diphosphate: step 8/9. The protein is Histidine biosynthesis bifunctional protein HisB of Legionella pneumophila (strain Lens).